Reading from the N-terminus, the 108-residue chain is UPF0060 membrane protein YnfA (108 aa).

The Periplasmic portion of the chain corresponds to 1–5; the sequence is MIKTT. A helical transmembrane segment spans residues 6-26; the sequence is LLFFATALCEIIGCFLPWLWL. The Cytoplasmic segment spans residues 27 to 30; it reads KRNA. A helical membrane pass occupies residues 31-51; sequence SIWLLLPAGISLALFVWLLTL. Topologically, residues 52–60 are periplasmic; it reads HPAASGRVY. A helical transmembrane segment spans residues 61 to 81; sequence AAYGGVYVCTALMWLRVVDGV. At 82 to 84 the chain is on the cytoplasmic side; sequence KLS. The helical transmembrane segment at 85 to 105 threads the bilayer; the sequence is LYDWTGALIALCGMLIIVAGW. The Periplasmic segment spans residues 106 to 108; sequence GRT.

It belongs to the UPF0060 family.

The protein resides in the cell inner membrane. This chain is UPF0060 membrane protein YnfA, found in Shigella flexneri serotype 5b (strain 8401).